Reading from the N-terminus, the 33-residue chain is Kappa-sparatoxin-Hv1a (33 aa).

Cystine bridges form between C2–C17, C9–C22, and C16–C27. The residue at position 33 (W33) is a Tryptophan amide.

Expressed by the venom gland.

The protein resides in the secreted. Its function is as follows. Blocks transient outward voltage-gated potassium channels in rat ventricular myocytes (thus prolonging action-potential duration) and rat Kv4.2/KCNA4 channels expressed in Xenopus oocytes. Is also a weak blocker of calcium channels in rat cerebellar granule cells. The sequence is that of Kappa-sparatoxin-Hv1a from Heteropoda venatoria (Brown huntsman spider).